The primary structure comprises 329 residues: Malate dehydrogenase (329 aa).

An NAD(+)-binding site is contributed by 12 to 18; that stretch reads GAAGQIG. 2 residues coordinate substrate: Arg93 and Arg99. Residues Asn106, Gln113, and 130–132 each bind NAD(+); that span reads TGN. Substrate contacts are provided by Asn132 and Arg163. His188 (proton acceptor) is an active-site residue.

The protein belongs to the LDH/MDH superfamily. MDH type 2 family.

It catalyses the reaction (S)-malate + NAD(+) = oxaloacetate + NADH + H(+). Catalyzes the reversible oxidation of malate to oxaloacetate. The polypeptide is Malate dehydrogenase (Mycobacterium avium (strain 104)).